Here is a 274-residue protein sequence, read N- to C-terminus: MKKCDLDYTQSICDALNTLRQQKPLVVNITNYVVMNNTANALLAIGASPIMAHSQEEMAEMMSFAGSLVINIGTLDSVWIPRMIYAVEQANANNKPVILDPVGCGASALRTNTARQIVALAEQLTIRGNASEIIALAGEQAQSKGVDALDSSDKAIHAAHHLATQNNCSVVISGATDYIVTTTATIALNNGHEMMPYVTGMGCSHTALTGAFAAIGEPTGLAATAVLGIAGEIAARDAAGPGSLQVNLLDTLYHLDEAVLREYIRINLVEEGCH.

Met-51 is a substrate binding site. Arg-127 and Ser-173 together coordinate ATP. Gly-200 is a substrate binding site.

It belongs to the Thz kinase family. Mg(2+) serves as cofactor.

The enzyme catalyses 5-(2-hydroxyethyl)-4-methylthiazole + ATP = 4-methyl-5-(2-phosphooxyethyl)-thiazole + ADP + H(+). Its pathway is cofactor biosynthesis; thiamine diphosphate biosynthesis; 4-methyl-5-(2-phosphoethyl)-thiazole from 5-(2-hydroxyethyl)-4-methylthiazole: step 1/1. Catalyzes the phosphorylation of the hydroxyl group of 4-methyl-5-beta-hydroxyethylthiazole (THZ). The sequence is that of Hydroxyethylthiazole kinase from Photobacterium profundum (strain SS9).